The chain runs to 268 residues: Serine/arginine-rich splicing factor SR30 (268 aa).

2 consecutive RRM domains span residues 7-82 (RTIY…IAHG) and 109-187 (YRVL…EYES). The segment covering 186 to 199 (ESRSVSRSPDDSKS) has biased composition (basic and acidic residues). The disordered stretch occupies residues 186-268 (ESRSVSRSPD…NSPVSPVISG (83 aa)). Ser-193, Ser-210, Ser-212, Ser-214, Ser-219, Ser-221, Ser-227, Ser-236, Ser-246, Ser-256, and Ser-260 each carry phosphoserine. The span at 207-247 (RGPSCSYSSKSRSVSPARSISPRSRPLSRSRSLYSSVSRSQ) shows a compositional bias: low complexity. Over residues 257–268 (RSNSPVSPVISG) the composition is skewed to low complexity.

The protein belongs to the splicing factor SR family. SR subfamily. As to quaternary structure, component of the spliceosome. Interacts with SNRNP35, CYP59 and CYP63. Phosphorylated. Ubiquitous.

The protein localises to the nucleus speckle. The protein resides in the nucleus. Its subcellular location is the nucleoplasm. It is found in the cytoplasm. Its function is as follows. Regulatory splicing factor that modulates alternative splicing and gene expression in specific cell types. Autoregulates its own expression. Probably involved in intron recognition and spliceosome assembly. The protein is Serine/arginine-rich splicing factor SR30 (SR30) of Arabidopsis thaliana (Mouse-ear cress).